The primary structure comprises 851 residues: Alanine--tRNA ligase (851 aa).

Residues His535, His539, Cys637, and His641 each coordinate Zn(2+).

The protein belongs to the class-II aminoacyl-tRNA synthetase family. Zn(2+) serves as cofactor.

The protein localises to the cytoplasm. It carries out the reaction tRNA(Ala) + L-alanine + ATP = L-alanyl-tRNA(Ala) + AMP + diphosphate. In terms of biological role, catalyzes the attachment of alanine to tRNA(Ala) in a two-step reaction: alanine is first activated by ATP to form Ala-AMP and then transferred to the acceptor end of tRNA(Ala). Also edits incorrectly charged Ser-tRNA(Ala) and Gly-tRNA(Ala) via its editing domain. The chain is Alanine--tRNA ligase from Acholeplasma laidlawii (strain PG-8A).